Reading from the N-terminus, the 226-residue chain is Transmembrane gamma-carboxyglutamic acid protein 4 (226 aa).

An N-terminal signal peptide occupies residues 1–17; that stretch reads MFPLLIVLSQLPRLTLA. The propeptide occupies 18–49; it reads VPHCIRSLKDSEHAPEEVFASKEAANIFMHRR. The Extracellular portion of the chain corresponds to 50–113; that stretch reads LLNNRFDLEL…GSDVNKEKID (64 aa). Positions 52-98 constitute a Gla domain; it reads NNRFDLELFTPGDLERECYEEFCSYEEAREILGDDENTIKFWQTYSI. C69 and C74 are disulfide-bonded. E72 carries the post-translational modification 4-carboxyglutamate. A helical transmembrane segment spans residues 114–134; sequence VMSLLTGLIVAGVFLVIFGLV. Residues 135–226 are Cytoplasmic-facing; it reads GYYVCLTKCK…FKKSMSLPSH (92 aa). Position 164 is a phosphoserine (S164). The short motif at 186 to 189 is the LPXY motif; mediates binding to WW domain-containing proteins element; it reads LPSY. The PPXY motif; mediates binding to WW domain-containing proteins motif lies at 204 to 207; the sequence is PPPY.

Belongs to the commissureless family. As to quaternary structure, interacts (via cytoplasmic domain) with WW domain-containing proteins MAGI1, MAGI3, NEDD4, NEDD4L, WWTR1/TAZ and YAP1. Gamma-carboxyglutamate residues are formed by vitamin K dependent carboxylation. These residues are essential for the binding of calcium.

The protein resides in the endoplasmic reticulum-Golgi intermediate compartment membrane. Its subcellular location is the cell membrane. Functionally, may control axon guidance across the CNS. Prevents the delivery of ROBO1 at the cell surface and down-regulates its expression. This chain is Transmembrane gamma-carboxyglutamic acid protein 4 (Prrg4), found in Mus musculus (Mouse).